A 180-amino-acid chain; its full sequence is NADH-quinone oxidoreductase subunit I (180 aa).

4Fe-4S ferredoxin-type domains are found at residues 50 to 80 and 90 to 119; these read LTRDPDGEERCVACNLCAVACPVGCISLQKA and EFFRINFSRCIFCGMCEEACPTTAIQLTPD. Residues cysteine 60, cysteine 63, cysteine 66, cysteine 70, cysteine 99, cysteine 102, cysteine 105, and cysteine 109 each contribute to the [4Fe-4S] cluster site.

The protein belongs to the complex I 23 kDa subunit family. NDH-1 is composed of 14 different subunits. Subunits NuoA, H, J, K, L, M, N constitute the membrane sector of the complex. [4Fe-4S] cluster serves as cofactor.

The protein localises to the cell inner membrane. The enzyme catalyses a quinone + NADH + 5 H(+)(in) = a quinol + NAD(+) + 4 H(+)(out). In terms of biological role, NDH-1 shuttles electrons from NADH, via FMN and iron-sulfur (Fe-S) centers, to quinones in the respiratory chain. The immediate electron acceptor for the enzyme in this species is believed to be ubiquinone. Couples the redox reaction to proton translocation (for every two electrons transferred, four hydrogen ions are translocated across the cytoplasmic membrane), and thus conserves the redox energy in a proton gradient. This Acinetobacter baumannii (strain ACICU) protein is NADH-quinone oxidoreductase subunit I.